Reading from the N-terminus, the 259-residue chain is Global transcriptional regulator CodY (259 aa).

The segment at 1–155 (MELLAKTRKL…SSTVVGMEIL (155 aa)) is GAF domain. The H-T-H motif DNA-binding region spans 203–222 (ASKIADRVGITRSVIVNALR). S215 is modified (phosphoserine).

This sequence belongs to the CodY family.

It localises to the cytoplasm. DNA-binding global transcriptional regulator which is involved in the adaptive response to starvation and acts by directly or indirectly controlling the expression of numerous genes in response to nutrient availability. During rapid exponential growth, CodY is highly active and represses genes whose products allow adaptation to nutrient depletion. This Bacillus mycoides (strain KBAB4) (Bacillus weihenstephanensis) protein is Global transcriptional regulator CodY.